We begin with the raw amino-acid sequence, 626 residues long: Chaperone protein HtpG (626 aa).

The interval 1–339 (MSQNQETRGF…SNDLPLNVSR (339 aa)) is a; substrate-binding. Residues 340–555 (EILQDNKITA…NDQMTTQMAK (216 aa)) are b. The c stretch occupies residues 556-626 (LFAAAGQPVP…FIKRINKLLG (71 aa)).

It belongs to the heat shock protein 90 family. Homodimer.

It is found in the cytoplasm. In terms of biological role, molecular chaperone. Has ATPase activity. The sequence is that of Chaperone protein HtpG from Haemophilus influenzae (strain ATCC 51907 / DSM 11121 / KW20 / Rd).